The primary structure comprises 394 residues: Dimethyladenosine transferase 2, mitochondrial (394 aa).

The N-terminal 19 residues, 1–19, are a transit peptide targeting the mitochondrion; it reads MWVPGAGIPSRLTLSAFTR. S-adenosyl-L-methionine is bound by residues Val-75, Glu-123, and Asp-149. The interval 326 to 327 is DNA-binding; it reads KR.

This sequence belongs to the class I-like SAM-binding methyltransferase superfamily. rRNA adenine N(6)-methyltransferase family. KsgA subfamily. Homodimer. Component of the mitochondrial transcription initiation complex, composed at least of TFB2M, TFAM and POLRMT. In this complex TFAM recruits POLRMT to the promoter whereas TFB2M induces structural changes in POLRMT to enable promoter opening and trapping of the DNA non-template strand. Interacts with mitochondrial RNA polymerase POLRMT. Interacts with TFAM.

The protein resides in the mitochondrion. It catalyses the reaction adenosine in rRNA + S-adenosyl-L-methionine = N(6)-methyladenosine in rRNA + S-adenosyl-L-homocysteine + H(+). Functionally, S-adenosyl-L-methionine-dependent rRNA methyltransferase which may methylate two specific adjacent adenosines in the loop of a conserved hairpin near the 3'-end of 12S mitochondrial rRNA. Component of the mitochondrial transcription initiation complex, composed at least of TFB2M, TFAM and POLRMT that is required for basal transcription of mitochondrial DNA. In this complex TFAM recruits POLRMT to a specific promoter whereas TFB2M induces structural changes in POLRMT to enable promoter opening and trapping of the DNA non-template strand. Stimulates transcription independently of the methyltransferase activity. The chain is Dimethyladenosine transferase 2, mitochondrial from Bos taurus (Bovine).